The primary structure comprises 107 residues: Ferredoxin-6 (107 aa).

The region spanning 2–106 is the 2Fe-2S ferredoxin-type domain; that stretch reads AKIIFIEHNG…GLVVHLPEKQ (105 aa). Positions 40, 46, 49, and 87 each coordinate [2Fe-2S] cluster.

It belongs to the adrenodoxin/putidaredoxin family. [2Fe-2S] cluster serves as cofactor.

In terms of biological role, ferredoxins are small electron carrier proteins that participate in various redox reactions. FdVI is an essential protein required for growth of R.capsulatus. May be involved in Fe-S cluster assembly. This is Ferredoxin-6 from Rhodobacter capsulatus (Rhodopseudomonas capsulata).